The chain runs to 512 residues: Maturase K (512 aa).

It belongs to the intron maturase 2 family. MatK subfamily.

Its subcellular location is the plastid. It localises to the chloroplast. Its function is as follows. Usually encoded in the trnK tRNA gene intron. Probably assists in splicing its own and other chloroplast group II introns. The polypeptide is Maturase K (Piper cenocladum (Ant piper)).